The primary structure comprises 294 residues: Probable 2-(5''-triphosphoribosyl)-3'-dephosphocoenzyme-A synthase (294 aa).

This sequence belongs to the CitG/MdcB family.

It catalyses the reaction 3'-dephospho-CoA + ATP = 2'-(5''-triphospho-alpha-D-ribosyl)-3'-dephospho-CoA + adenine. This is Probable 2-(5''-triphosphoribosyl)-3'-dephosphocoenzyme-A synthase from Streptococcus equi subsp. equi (strain 4047).